Reading from the N-terminus, the 134-residue chain is Small ribosomal subunit protein uS8c (134 aa).

Belongs to the universal ribosomal protein uS8 family. In terms of assembly, part of the 30S ribosomal subunit.

The protein resides in the plastid. Its subcellular location is the chloroplast. One of the primary rRNA binding proteins, it binds directly to 16S rRNA central domain where it helps coordinate assembly of the platform of the 30S subunit. The sequence is that of Small ribosomal subunit protein uS8c (rps8) from Chloranthus spicatus (Chulantree).